The chain runs to 277 residues: Co-chaperone protein DjlA (277 aa).

The Periplasmic segment spans residues 1–4 (MWGK). A helical membrane pass occupies residues 5 to 28 (ILGAFFGFLLGGPFGLLLGLFLGH). Residues 29-277 (KFDKARRNVY…DMIRKEKGFK (249 aa)) are Cytoplasmic-facing. The J domain occupies 211-277 (DAYEVLGVTE…DMIRKEKGFK (67 aa)).

In terms of assembly, homodimer.

The protein localises to the cell inner membrane. Regulatory DnaK co-chaperone. Direct interaction between DnaK and DjlA is needed for the induction of the wcaABCDE operon, involved in the synthesis of a colanic acid polysaccharide capsule, possibly through activation of the RcsB/RcsC phosphotransfer signaling pathway. The colanic acid capsule may help the bacterium survive conditions outside the host. In Photobacterium profundum (strain SS9), this protein is Co-chaperone protein DjlA.